Here is a 338-residue protein sequence, read N- to C-terminus: Glycerol-3-phosphate dehydrogenase [NAD(P)+] 1 (338 aa).

Positions 11, 12, 32, 33, and 109 each coordinate NADPH. The sn-glycerol 3-phosphate site is built by Lys-109, Gly-140, and Ser-142. Ala-144 is an NADPH binding site. Residues Lys-195, Asp-248, Ser-258, Arg-259, and Asn-260 each contribute to the sn-glycerol 3-phosphate site. Lys-195 functions as the Proton acceptor in the catalytic mechanism. Position 259 (Arg-259) interacts with NADPH. NADPH contacts are provided by Val-283 and Glu-285.

This sequence belongs to the NAD-dependent glycerol-3-phosphate dehydrogenase family.

It is found in the cytoplasm. The enzyme catalyses sn-glycerol 3-phosphate + NAD(+) = dihydroxyacetone phosphate + NADH + H(+). It catalyses the reaction sn-glycerol 3-phosphate + NADP(+) = dihydroxyacetone phosphate + NADPH + H(+). The protein operates within membrane lipid metabolism; glycerophospholipid metabolism. Its function is as follows. Catalyzes the reduction of the glycolytic intermediate dihydroxyacetone phosphate (DHAP) to sn-glycerol 3-phosphate (G3P), the key precursor for phospholipid synthesis. This chain is Glycerol-3-phosphate dehydrogenase [NAD(P)+] 1, found in Lactobacillus delbrueckii subsp. bulgaricus (strain ATCC 11842 / DSM 20081 / BCRC 10696 / JCM 1002 / NBRC 13953 / NCIMB 11778 / NCTC 12712 / WDCM 00102 / Lb 14).